Here is a 352-residue protein sequence, read N- to C-terminus: tRNA pseudouridine synthase D (352 aa).

D81 functions as the Nucleophile in the catalytic mechanism. Residues 157 to 303 (GVPNYFGGQR…MSHERRILRL (147 aa)) enclose the TRUD domain.

This sequence belongs to the pseudouridine synthase TruD family.

It carries out the reaction uridine(13) in tRNA = pseudouridine(13) in tRNA. Functionally, responsible for synthesis of pseudouridine from uracil-13 in transfer RNAs. This Pseudomonas putida (strain W619) protein is tRNA pseudouridine synthase D.